A 318-amino-acid chain; its full sequence is UPF0725 protein At3g44770 (318 aa).

The protein belongs to the UPF0725 (EMB2204) family.

The protein is UPF0725 protein At3g44770 of Arabidopsis thaliana (Mouse-ear cress).